We begin with the raw amino-acid sequence, 66 residues long: Moricin-2 (66 aa).

An N-terminal signal peptide occupies residues 1-24; it reads MNILKLFFVFIVAMSLVSCSTAAP.

Expressed in fat body and to a lesser extent in hemocyte and Malpighian tubules.

The protein localises to the secreted. Functionally, has antibacterial activity against Gram-positive and Gram-negative bacteria. Probably acts by disturbing membrane functions with its amphipathic structure. This Bombyx mori (Silk moth) protein is Moricin-2 (MOR2).